An 82-amino-acid chain; its full sequence is UPF0235 protein Pden_2174 (82 aa).

Belongs to the UPF0235 family.

This chain is UPF0235 protein Pden_2174, found in Paracoccus denitrificans (strain Pd 1222).